The primary structure comprises 370 residues: Putative FBD-associated F-box protein At1g50980 (370 aa).

In terms of domain architecture, F-box spans 31–77 (IRTISEFPDKVLLKILSLLPSKDVVATGVLSKRWRSLWKDVKTFRTS). Positions 292-343 (LMGNQPDLIPKSLSSHLEILEWRQYNDTAQEREAAKYILANASGLRKATFYT) constitute an FBD domain.

This is Putative FBD-associated F-box protein At1g50980 from Arabidopsis thaliana (Mouse-ear cress).